Reading from the N-terminus, the 470-residue chain is MGKTLFQKIWDAHTVGILPDGRTQMFIATHLLHEVTSPQAFGMVRDLGLTVRHPERTFATVDHIIPTDNQAEPFADATADAMIRELRRNCAENGIRFFDLPTGLQGIVHMVGPELGITQPGMTIVCGDSHTATHGAFGAIAMGIGTTQVRDVLATQTLALSPLKVRRINVNGKLAPGVRAKDVALHIIGLLGAKGGLGFAYEYGGEVIDAMSMDERMTLCNMSIEGAARCGYVNPDRTTVEYIKGRLFAPTGADWDKAVERWLGFASDADAEYDEIVEIDGASIEPTLTWGISPDQNTGISGSTPNPSDAADDDERKMINEALEYMKFPADMPLKGLPVQVCFVGSCTNGRISDFREVAALIKGRHVAPGIRALAVPGSQMTARQCEEEGIADIFREAGFEWRLAGCSMCLAMNPDKLQGDQLCASSSNRNFKGRQGSPTGRTLLMSPAMVAAAALTGKVSDAREVFSLN.

Residues 294 to 307 show a composition bias toward polar residues; sequence PDQNTGISGSTPNP. Positions 294 to 313 are disordered; sequence PDQNTGISGSTPNPSDAADD. Residues C347, C407, and C410 each contribute to the [4Fe-4S] cluster site.

The protein belongs to the aconitase/IPM isomerase family. LeuC type 1 subfamily. In terms of assembly, heterodimer of LeuC and LeuD. Requires [4Fe-4S] cluster as cofactor.

The catalysed reaction is (2R,3S)-3-isopropylmalate = (2S)-2-isopropylmalate. It participates in amino-acid biosynthesis; L-leucine biosynthesis; L-leucine from 3-methyl-2-oxobutanoate: step 2/4. Its function is as follows. Catalyzes the isomerization between 2-isopropylmalate and 3-isopropylmalate, via the formation of 2-isopropylmaleate. In Akkermansia muciniphila (strain ATCC BAA-835 / DSM 22959 / JCM 33894 / BCRC 81048 / CCUG 64013 / CIP 107961 / Muc), this protein is 3-isopropylmalate dehydratase large subunit.